The sequence spans 309 residues: 11-beta-hydroxysteroid dehydrogenase-like 3 (309 aa).

Residues 10 to 30 traverse the membrane as a helical; Signal-anchor for type II membrane protein segment; sequence LLLPPLTIIFLFLFYPFYLLI. Residues 54-80 and aspartate 105 contribute to the NADP(+) site; that span reads GASSGIGEHVAYEYAKKGAYLALVARR. Residue serine 184 coordinates substrate. Tyrosine 197 serves as the catalytic Proton acceptor. NADP(+) is bound by residues 197–201 and lysine 201; that span reads YAASK.

The protein belongs to the short-chain dehydrogenases/reductases (SDR) family.

The protein localises to the membrane. The chain is 11-beta-hydroxysteroid dehydrogenase-like 3 (HSD3) from Arabidopsis thaliana (Mouse-ear cress).